The chain runs to 548 residues: Chaperonin GroEL (548 aa).

Residues 30 to 33 (TLGP), Lys51, 87 to 91 (DGTTT), Gly415, and Asp495 each bind ATP.

It belongs to the chaperonin (HSP60) family. In terms of assembly, forms a cylinder of 14 subunits composed of two heptameric rings stacked back-to-back. Interacts with the co-chaperonin GroES.

It is found in the cytoplasm. It carries out the reaction ATP + H2O + a folded polypeptide = ADP + phosphate + an unfolded polypeptide.. Functionally, together with its co-chaperonin GroES, plays an essential role in assisting protein folding. The GroEL-GroES system forms a nano-cage that allows encapsulation of the non-native substrate proteins and provides a physical environment optimized to promote and accelerate protein folding. The sequence is that of Chaperonin GroEL from Erwinia tasmaniensis (strain DSM 17950 / CFBP 7177 / CIP 109463 / NCPPB 4357 / Et1/99).